Reading from the N-terminus, the 411-residue chain is F-box protein At4g19940 (411 aa).

One can recognise an F-box domain in the interval 29-75; that stretch reads RQPIPEIPFDLVIEILTRLPAKSLMRFKSVSKLWSSLICSRNFTNRL.

This chain is F-box protein At4g19940, found in Arabidopsis thaliana (Mouse-ear cress).